Here is a 208-residue protein sequence, read N- to C-terminus: uncharacterized protein (208 aa).

This is an uncharacterized protein from Schizosaccharomyces pombe (strain 972 / ATCC 24843) (Fission yeast).